Consider the following 288-residue polypeptide: S-methyl-5'-thioadenosine phosphorylase (288 aa).

Residues S10, 52-53, and 85-86 contribute to the phosphate site; these read RH and TA. M188 is a binding site for substrate. T189 contributes to the phosphate binding site. 212-214 is a substrate binding site; it reads DYD.

Belongs to the PNP/MTAP phosphorylase family. MTAP subfamily. As to quaternary structure, homotrimer.

It is found in the cytoplasm. The protein localises to the nucleus. It carries out the reaction S-methyl-5'-thioadenosine + phosphate = 5-(methylsulfanyl)-alpha-D-ribose 1-phosphate + adenine. It functions in the pathway amino-acid biosynthesis; L-methionine biosynthesis via salvage pathway; S-methyl-5-thio-alpha-D-ribose 1-phosphate from S-methyl-5'-thioadenosine (phosphorylase route): step 1/1. Functionally, catalyzes the reversible phosphorylation of S-methyl-5'-thioadenosine (MTA) to adenine and 5-methylthioribose-1-phosphate. Involved in the breakdown of MTA, a major by-product of polyamine biosynthesis. Responsible for the first step in the methionine salvage pathway after MTA has been generated from S-adenosylmethionine. Has broad substrate specificity with 6-aminopurine nucleosides as preferred substrates. This chain is S-methyl-5'-thioadenosine phosphorylase, found in Caenorhabditis elegans.